Here is a 557-residue protein sequence, read N- to C-terminus: Copine-6 (557 aa).

C2 domains lie at Ser2–Leu127 and Thr134–Asp263. The Ca(2+) site is built by Asp167, Asp173, Asp229, Asp231, and Asp237. The linker region stretch occupies residues Ser244 to Cys303. A VWFA domain is found at Ser306–Val526.

Belongs to the copine family. As to quaternary structure, interacts (via second C2 domain) with OS9 (via C-terminus); this interaction occurs in a calcium-dependent manner in vitro. May interact with NECAB1. The cofactor is Ca(2+).

The protein resides in the cytoplasm. Its subcellular location is the cell membrane. The protein localises to the endosome. It is found in the cytoplasmic vesicle. It localises to the clathrin-coated vesicle. The protein resides in the perikaryon. Its subcellular location is the cell projection. The protein localises to the dendrite. Functionally, calcium-dependent phospholipid-binding protein that plays a role in calcium-mediated intracellular processes. Binds phospholipid membranes in a calcium-dependent manner. Plays a role in dendrite formation by melanocytes. The sequence is that of Copine-6 from Pongo abelii (Sumatran orangutan).